Reading from the N-terminus, the 180-residue chain is MVQRLDSFYQEQSIPQLIKEFHYKNKHQVPKLDKIVINRGLGDASQNAKVLESCSKEQSIITRQQGVVTRSKKAIASFKLREKMPVGLVVTLRGDKMYAFLDRLINLALPRIRDFQGVSRKSFDGRGNYSLGLEEQLMFPEIDYDKIDQIRGMDVSIVTTAKTDKEAMALFKTFGMPFKN.

This sequence belongs to the universal ribosomal protein uL5 family. In terms of assembly, part of the 50S ribosomal subunit; contacts the 5S rRNA.

It is found in the plastid. It localises to the chloroplast. Its function is as follows. Binds 5S rRNA, forms part of the central protuberance of the 50S subunit. This Chlorella vulgaris (Green alga) protein is Large ribosomal subunit protein uL5c (rpl5).